The primary structure comprises 142 residues: Peptide methionine sulfoxide reductase MsrB (142 aa).

Positions 2–125 (IKKDKNELNE…NSAAIQFIPY (124 aa)) constitute a MsrB domain. Cys114 acts as the Nucleophile in catalysis.

The protein belongs to the MsrB Met sulfoxide reductase family.

It carries out the reaction L-methionyl-[protein] + [thioredoxin]-disulfide + H2O = L-methionyl-(R)-S-oxide-[protein] + [thioredoxin]-dithiol. This chain is Peptide methionine sulfoxide reductase MsrB, found in Staphylococcus haemolyticus (strain JCSC1435).